Consider the following 1395-residue polypeptide: G2/mitotic-specific cyclin-B3 (1395 aa).

Positions 1–59 are disordered; that stretch reads MLLPLPPQSSKPVPKKSQSSKIVPSHHDPSEKTGENCQTKISPSSLQESPSSLQGALKK. The span at 10-23 shows a compositional bias: low complexity; that stretch reads SKPVPKKSQSSKIV. A compositionally biased stretch (basic and acidic residues) spans 25 to 34; it reads SHHDPSEKTG. Positions 42–54 are enriched in low complexity; the sequence is SPSSLQESPSSLQ. The short motif at 60-68 is the D-box element; the sequence is RSAFEDLTN. 2 disordered regions span residues 418–464 and 1074–1122; these read LSIK…PTEE and ATMT…DSSD. A compositionally biased stretch (basic and acidic residues) spans 419-431; the sequence is SIKEKPSTEKESF. The span at 1082–1093 shows a compositional bias: low complexity; that stretch reads SRTTTESSACES.

It belongs to the cyclin family. Cyclin AB subfamily. Interacts with CDK2 kinase. In terms of processing, ubiquitinated. Ubiquitination leads to its degradation during anaphase entry, after degradation of CCNB1. Testis specific. In testis, it is expressed in developing germ cells, but not in Leydig cells. Weakly or not expressed in other tissues.

It localises to the nucleus. Its function is as follows. Cyclins are positive regulatory subunits of the cyclin-dependent kinases (CDKs), and thereby play an essential role in the control of the cell cycle, notably via their destruction during cell division. Its tissue specificity suggest that it may be required during early meiotic prophase I. The sequence is that of G2/mitotic-specific cyclin-B3 (CCNB3) from Homo sapiens (Human).